A 681-amino-acid chain; its full sequence is METLQMKEAALVYLDRSGGLQKFIDDCKSYNDSKQSYAVYRFSILIDPCDVVELDADLGNHILHHPLKAARVFQSVCFVAVKTLSLIGQLQTETQINIVLKLTHLPALPSYTLDLCEFPLNYASQRFYMMQGIVIAMTTITKYTQGARFLCSDGVCPLSKGFQYVRVHVPGATESATVRNDFLCSLCSSSLQEDRKFRVLGDKQIVEIITTKMFHAFQGDSKNQPFRFQSLGIFLRDELVNKMKIGNEYKIIGIPVCVKTSQTALCVEANNITPHTAKVPLGISDNFRRLLSLTSSSCWKFTAMLANVFASQIVAPGTYNLLKLCLLMSLVQTRDCNREREDCLDILVITSDTLLVDRLLNFSMNLVSRGIRHPVCTEVFPTVSRNKYGTGAVSIQAGSALLAKGGICFIGDLTSHKKDKLEQLQSALESRSVTVFIPGKKFGDDFDQQMTFPIQCSFWSFVDMDSSSRRNVQKTSTLIGQMDCSLIPANLAEAFGLLINCSEASPCHPLLPTVQHTLKKAVEPEGLLYLASKQFTTEDFEKLLAFAKSLNMEFSLEAERMIHGYYLASRRIRTDSIHGSKLSASALKYLVSLSEAHARLSLRTTVLREDALIAALLLEISLTLRYGATPFCVAPNALFPFELYNEEYLEQRDLYLTQCQQQLQQFIATCGPGTTVFSSDE.

At Ser-292 the chain carries Phosphoserine. In terms of domain architecture, MCM spans 533-621 (KQFTTEDFEK…LIAALLLEIS (89 aa)).

As to expression, predominantly expressed in the gonads and the brain. Not detected in the heart, lung, nor embryonic fibroblasts.

Its function is as follows. Plays an important role in meiotic recombination and associated DNA double-strand break repair. This Mus musculus (Mouse) protein is Minichromosome maintenance domain-containing protein 2 (Mcmdc2).